We begin with the raw amino-acid sequence, 715 residues long: 1,4-alpha-glucan branching enzyme GlgB (715 aa).

D396 (nucleophile) is an active-site residue. E449 serves as the catalytic Proton donor.

This sequence belongs to the glycosyl hydrolase 13 family. GlgB subfamily. Monomer.

The catalysed reaction is Transfers a segment of a (1-&gt;4)-alpha-D-glucan chain to a primary hydroxy group in a similar glucan chain.. Its pathway is glycan biosynthesis; glycogen biosynthesis. In terms of biological role, catalyzes the formation of the alpha-1,6-glucosidic linkages in glycogen by scission of a 1,4-alpha-linked oligosaccharide from growing alpha-1,4-glucan chains and the subsequent attachment of the oligosaccharide to the alpha-1,6 position. This chain is 1,4-alpha-glucan branching enzyme GlgB, found in Vibrio vulnificus (strain YJ016).